Consider the following 426-residue polypeptide: Serine/threonine-protein kinase ssn3 (426 aa).

In terms of domain architecture, Protein kinase spans Y41–F368. Residues I47–V55 and K71 contribute to the ATP site. The active-site Proton acceptor is the D173. The segment at R390–E426 is disordered.

This sequence belongs to the protein kinase superfamily. CMGC Ser/Thr protein kinase family. CDC2/CDKX subfamily. As to quaternary structure, component of the srb8-11 complex, a regulatory module of the Mediator complex. Requires Mg(2+) as cofactor.

It localises to the nucleus. The catalysed reaction is L-seryl-[protein] + ATP = O-phospho-L-seryl-[protein] + ADP + H(+). It carries out the reaction L-threonyl-[protein] + ATP = O-phospho-L-threonyl-[protein] + ADP + H(+). It catalyses the reaction [DNA-directed RNA polymerase] + ATP = phospho-[DNA-directed RNA polymerase] + ADP + H(+). Component of the srb8-11 complex. The srb8-11 complex is a regulatory module of the Mediator complex which is itself involved in regulation of basal and activated RNA polymerase II-dependent transcription. The srb8-11 complex may be involved in the transcriptional repression of a subset of genes regulated by Mediator. It may inhibit the association of the Mediator complex with RNA polymerase II to form the holoenzyme complex. The srb8-11 complex phosphorylates the C-terminal domain (CTD) of the largest subunit of RNA polymerase II. The polypeptide is Serine/threonine-protein kinase ssn3 (ssn3) (Aspergillus fumigatus (strain ATCC MYA-4609 / CBS 101355 / FGSC A1100 / Af293) (Neosartorya fumigata)).